We begin with the raw amino-acid sequence, 880 residues long: Kinesin heavy chain (880 aa).

Residues 4–327 (SIKVVCRFRP…LRFGMRAKAI (324 aa)) enclose the Kinesin motor domain. Residues 85–92 (GQTGAGKS) and 235–242 (GSEKVGKT) contribute to the ATP site. Residues 388 to 426 (VSGAKAAAAQTPRPSTPSRLATESRAETPVAERSATPGI) form a disordered region. Residues 399 to 408 (PRPSTPSRLA) are compositionally biased toward polar residues. Residues 428–849 (IDKDEREEFL…QEKLTTASHR (422 aa)) are a coiled coil.

This sequence belongs to the TRAFAC class myosin-kinesin ATPase superfamily. Kinesin family. Kinesin subfamily.

It is found in the cytoplasm. It localises to the cytoskeleton. Functionally, kinesin is a microtubule-associated force-producing protein that may play a role in organelle transport. Its motor activity is directed toward the microtubule's plus end. The polypeptide is Kinesin heavy chain (klp1) (Botryotinia fuckeliana (Noble rot fungus)).